The sequence spans 723 residues: Transmembrane channel-like protein 7 (723 aa).

Disordered stretches follow at residues Met-1–Asp-28 and Arg-51–Asp-71. Over Met-1–Arg-168 the chain is Extracellular. An N-linked (GlcNAc...) asparagine glycan is attached at Asn-24. The N-linked (GlcNAc...) asparagine glycan is linked to Asn-84. A Phosphoserine modification is found at Ser-89. An N-linked (GlcNAc...) asparagine glycan is attached at Asn-96. The helical transmembrane segment at Phe-169–Val-189 threads the bilayer. Residues Leu-190 to Ser-219 lie on the Cytoplasmic side of the membrane. The helical transmembrane segment at Ser-220–Leu-240 threads the bilayer. The Extracellular segment spans residues Glu-241–Asp-263. Asn-259 is a glycosylation site (N-linked (GlcNAc...) asparagine). Residues Leu-264–Val-284 traverse the membrane as a helical segment. Residues Lys-285–Arg-362 lie on the Cytoplasmic side of the membrane. Residues Leu-363–Ala-383 form a helical membrane-spanning segment. Topologically, residues Thr-384 to Leu-404 are extracellular. Residues Phe-405–Phe-425 traverse the membrane as a helical segment. Residues Ala-426 to Glu-494 are Cytoplasmic-facing. The chain crosses the membrane as a helical span at residues Met-495–Phe-515. The Extracellular segment spans residues Pro-516 to Trp-555. The helical transmembrane segment at Ile-556–Phe-576 threads the bilayer. Residues Tyr-577–Phe-601 are Cytoplasmic-facing. Residues Phe-602–Ile-622 traverse the membrane as a helical segment. Topologically, residues Ser-623–Glu-665 are extracellular. The N-linked (GlcNAc...) asparagine glycan is linked to Asn-638. A helical transmembrane segment spans residues Ala-666–Ala-686. Residues Gly-687–Asn-723 lie on the Cytoplasmic side of the membrane.

This sequence belongs to the TMC family. Interacts with PIEZO2; the interaction inhibits PIEZO2-conducted mechanically activated currents.

It localises to the membrane. Acts as an inhibitory modulator of PIEZO2 mechanosensitive channel in dorsal root ganglion (DRG) neurons through physical interactions or interference with the interaction between PIEZO2 and the cytoskeleton. This chain is Transmembrane channel-like protein 7, found in Homo sapiens (Human).